A 651-amino-acid chain; its full sequence is MGLSTYVGIFLLCILTLSRCKSGKEEYGTVIGIDLGTTYSCVGVFKNGRVEIIANDQGNRITPSYVAFSGDGERLIGDAAKNQLTSNPKNTLFDAKRLIGRDYHDKDVQGDIKRYPFKVINKNNKPYMKVQVGSEEKGFAPEEVSAMVLSKMKEIAEAYLGTEVTHAVVTVPAYFNDAQRQATKDAGAIAGLTVLRIINEPTAAAIAYGLEKKDTEKNILVFDLGGGTFDVSLLTIDNGVFEVVATSGDTHLGGEDFDQRLIDYFVKLYKKKEGKDITKDDRAVQKLRREVEKAKRTLSTEHSTMIEIDNLFEGKDFSEPLTRARFEELNNDLFRSTLKPVMKVMEDSGLKKEDIDDIVLVGGSTRIPKIQQLVKEFFNGKEPIRGINPDEAVAYGAAVQAGVISGVEDTGDIVLLDVCPLTMGIETVGGVMTKLIPRNTVIPTKKSQIFSTAADNQPTVTIQVFEGERPMTKDNHFLGKFDLTGIPPAPRGLPQIEVTFEIDVNGILRVSAEDKGTGKKSNIVINKETNRITPEEIERMIQDAEKFSDQDKQVKERVEVRNDLESLAYSIKNQVKDKEKMGGKLSDDEIKTIEDAADEAIKWMENNPQAETSDYKKQKANLESVVQPIVSKLYEGAAPPPPTESTPKEEL.

Positions 1–20 (MGLSTYVGIFLLCILTLSRC) are cleaved as a signal peptide. ATP contacts are provided by residues 36–39 (GTTY), Lys96, 226–228 (GGT), 292–299 (EKAKRTLS), and 363–366 (GSTR). The nucleotide-binding (NBD) stretch occupies residues 125-279 (KPYMKVQVGS…KKKEGKDITK (155 aa)). The tract at residues 399–499 (VQAGVISGVE…PRGLPQIEVT (101 aa)) is substrate-binding (SBD). A Prevents secretion from ER motif is present at residues 648 to 651 (KEEL).

The protein belongs to the heat shock protein 70 family.

It is found in the endoplasmic reticulum lumen. It carries out the reaction ATP + H2O = ADP + phosphate + H(+). The chaperone activity is regulated by ATP-induced allosteric coupling of the nucleotide-binding (NBD) and substrate-binding (SBD) domains. In the ADP-bound and nucleotide-free (apo) states, the two domains have little interaction. In contrast, in the ATP-bound state the two domains are tightly coupled, which results in drastically accelerated kinetics in both binding and release of polypeptide substrates. J domain-containing co-chaperones stimulate the ATPase activity and are required for efficient substrate recognition. In terms of biological role, endoplasmic reticulum chaperone that plays a key role in protein folding and quality control in the endoplasmic reticulum lumen. Involved in the correct folding of proteins and degradation of misfolded proteins. Acts as a key repressor of the unfolded protein response (UPR). This Echinococcus granulosus (Hydatid tapeworm) protein is Endoplasmic reticulum chaperone BiP.